We begin with the raw amino-acid sequence, 488 residues long: Glutamyl-tRNA(Gln) amidotransferase subunit A (488 aa).

Active-site charge relay system residues include lysine 77 and serine 152. Serine 176 serves as the catalytic Acyl-ester intermediate.

The protein belongs to the amidase family. GatA subfamily. Heterotrimer of A, B and C subunits.

It catalyses the reaction L-glutamyl-tRNA(Gln) + L-glutamine + ATP + H2O = L-glutaminyl-tRNA(Gln) + L-glutamate + ADP + phosphate + H(+). In terms of biological role, allows the formation of correctly charged Gln-tRNA(Gln) through the transamidation of misacylated Glu-tRNA(Gln) in organisms which lack glutaminyl-tRNA synthetase. The reaction takes place in the presence of glutamine and ATP through an activated gamma-phospho-Glu-tRNA(Gln). The sequence is that of Glutamyl-tRNA(Gln) amidotransferase subunit A from Streptococcus pyogenes serotype M5 (strain Manfredo).